Reading from the N-terminus, the 308-residue chain is D-alanine--D-alanine ligase (308 aa).

Residues 105–302 (KAIFKALGLD…FPELCERILD (198 aa)) enclose the ATP-grasp domain. ATP is bound at residue 133 to 188 (DLPFGVPCVVKPAGEGSSVGVQIVKDAARLADACREAARYKGDVVVERYVKGTEVN). Residues aspartate 256, glutamate 269, and asparagine 271 each contribute to the Mg(2+) site.

The protein belongs to the D-alanine--D-alanine ligase family. The cofactor is Mg(2+). It depends on Mn(2+) as a cofactor.

The protein localises to the cytoplasm. It catalyses the reaction 2 D-alanine + ATP = D-alanyl-D-alanine + ADP + phosphate + H(+). The protein operates within cell wall biogenesis; peptidoglycan biosynthesis. In terms of biological role, cell wall formation. The sequence is that of D-alanine--D-alanine ligase from Anaeromyxobacter sp. (strain Fw109-5).